Consider the following 312-residue polypeptide: Acetaldehyde dehydrogenase (312 aa).

12-15 (SGNI) contacts NAD(+). The active-site Acyl-thioester intermediate is C132. Residues 163 to 171 (SAGPGTRAN) and N290 each bind NAD(+).

This sequence belongs to the acetaldehyde dehydrogenase family. In terms of assembly, heterotetramer composed of two DmpG (aldolase) and two DmpF (dehydrogenase) subunits, which allows a direct channeling of acetaldehyde between the two active sites.

The enzyme catalyses acetaldehyde + NAD(+) + CoA = acetyl-CoA + NADH + H(+). Its pathway is aromatic compound metabolism; phenol degradation. Is not activated by Mn(2+), Mg(2+), Ca(2+), Zn(2+) or Co(2+). Catalyzes the conversion of acetaldehyde to acetyl-CoA, using NAD(+) and coenzyme A. Can also act on propanal and butanal to form propanoyl-CoA and butanoyl-CoA, respectively. Is the final enzyme in the meta-cleavage pathway for the degradation of aromatic compounds such as phenols, cresols and catechols. NADP(+) can replace NAD(+) but the rate of reaction is much slower. This is Acetaldehyde dehydrogenase (dmpF) from Pseudomonas sp. (strain CF600).